Consider the following 539-residue polypeptide: Cytochrome P450 monooxygenase pvhE (539 aa).

The chain crosses the membrane as a helical span at residues 15–31 (VAFCSLVILCILFKVLT). Residue Asn379 is glycosylated (N-linked (GlcNAc...) asparagine). Cys473 serves as a coordination point for heme.

Belongs to the cytochrome P450 family. The cofactor is heme.

It is found in the membrane. It participates in secondary metabolite biosynthesis. Cytochrome P450 monooxygenase; part of the gene cluster that mediates the biosynthesis of varicidin A, an antifungal natural product containing a cis-octahydrodecalin core. The PKS module of pvhA together with the enoylreductase pvhC catalyze the formation of the polyketide unit which is then conjugated to L-isoleucine by the condensation domain of the NRPS module. Activity of the Dieckmann cyclase domain (RED) of pvhA results in release of an acyclic tetramate. The cytochrome P450 monooxygenase pvhE then catalyzes the oxidation of the C21 methyl group to a to carboxylate group. The methyltransferase pvhD then further methylates the pvhE product. The Diels-Alderase pvhB is able to catalyze Diels-Alder cycloaddition using both pvhE and pvhD products as substrates to form the decalin ring, yielding varicidin B and A, respectively. The sequence is that of Cytochrome P450 monooxygenase pvhE from Talaromyces variabilis (Penicillium variabile).